Here is a 331-residue protein sequence, read N- to C-terminus: Anthranilate phosphoribosyltransferase (331 aa).

5-phospho-alpha-D-ribose 1-diphosphate is bound by residues glycine 79, 82 to 83 (GD), threonine 87, 89 to 92 (NIST), 107 to 115 (KHGNYGATS), and alanine 119. Position 79 (glycine 79) interacts with anthranilate. Mg(2+) is bound at residue serine 91. Position 110 (asparagine 110) interacts with anthranilate. Arginine 165 provides a ligand contact to anthranilate. Mg(2+)-binding residues include aspartate 223 and glutamate 224.

This sequence belongs to the anthranilate phosphoribosyltransferase family. Homodimer. The cofactor is Mg(2+).

It carries out the reaction N-(5-phospho-beta-D-ribosyl)anthranilate + diphosphate = 5-phospho-alpha-D-ribose 1-diphosphate + anthranilate. It participates in amino-acid biosynthesis; L-tryptophan biosynthesis; L-tryptophan from chorismate: step 2/5. In terms of biological role, catalyzes the transfer of the phosphoribosyl group of 5-phosphorylribose-1-pyrophosphate (PRPP) to anthranilate to yield N-(5'-phosphoribosyl)-anthranilate (PRA). This is Anthranilate phosphoribosyltransferase from Phocaeicola vulgatus (strain ATCC 8482 / DSM 1447 / JCM 5826 / CCUG 4940 / NBRC 14291 / NCTC 11154) (Bacteroides vulgatus).